Consider the following 41-residue polypeptide: uncharacterized protein (41 aa).

This is an uncharacterized protein from Rickettsia prowazekii (strain Madrid E).